The following is a 204-amino-acid chain: MRKMSKRQQEILDYIVAQVKLKGYPPSVREIGEAVGLASSSTVHGHLDRLEKRGLIRRDPTKPRAIEILLDKPEEDHEAIVHIPVIGKVTAGFPITAIENIEEHFPLPAHYVGNENVFMLTIDGESMINAGILDGDRVIVRQQNTAENGEIVVAMTEDSEATVKRFFLEDQQVRLQPENDSMDPMYFDNVSILGKVIGVYRTIH.

A DNA-binding region (H-T-H motif) is located at residues 28 to 48 (VREIGEAVGLASSSTVHGHLD). Residues Ser-126 and Lys-164 each act as for autocatalytic cleavage activity in the active site.

This sequence belongs to the peptidase S24 family. In terms of assembly, homodimer.

It carries out the reaction Hydrolysis of Ala-|-Gly bond in repressor LexA.. Its function is as follows. Represses a number of genes involved in the response to DNA damage (SOS response), including recA and lexA. In the presence of single-stranded DNA, RecA interacts with LexA causing an autocatalytic cleavage which disrupts the DNA-binding part of LexA, leading to derepression of the SOS regulon and eventually DNA repair. This Exiguobacterium sibiricum (strain DSM 17290 / CCUG 55495 / CIP 109462 / JCM 13490 / 255-15) protein is LexA repressor.